Reading from the N-terminus, the 178-residue chain is Large ribosomal subunit protein uL5 (178 aa).

The protein belongs to the universal ribosomal protein uL5 family. Part of the 50S ribosomal subunit; part of the 5S rRNA/L5/L18/L25 subcomplex. Contacts the 5S rRNA and the P site tRNA. Forms a bridge to the 30S subunit in the 70S ribosome.

Its function is as follows. This is one of the proteins that bind and probably mediate the attachment of the 5S RNA into the large ribosomal subunit, where it forms part of the central protuberance. In the 70S ribosome it contacts protein S13 of the 30S subunit (bridge B1b), connecting the 2 subunits; this bridge is implicated in subunit movement. Contacts the P site tRNA; the 5S rRNA and some of its associated proteins might help stabilize positioning of ribosome-bound tRNAs. This is Large ribosomal subunit protein uL5 from Psychrobacter sp. (strain PRwf-1).